Reading from the N-terminus, the 104-residue chain is Circadian clock oscillator protein KaiB (104 aa).

This sequence belongs to the KaiB family. The KaiABC complex composition changes during the circadian cycle to control KaiC phosphorylation. Complexes KaiC(6), KaiA(2-4):KaiC(6), KaiB(6):KaiC(6) and KaiC(6):KaiB(6):KaiA(12) are among the most important forms, many form cooperatively. Undergoes a major conformational rearrangment; in the free state forms homotetramers as a dimer of dimers. When bound to the CI domain of KaiC switches to a monomeric thioredoxin-fold (KaiB(fs)). KaiB(fs) binds CikA, leading it to dephosphorylate phospho-RpaA.

Its function is as follows. Key component of the KaiABC oscillator complex, which constitutes the main circadian regulator in cyanobacteria. Complex composition changes during the circadian cycle to control KaiC phosphorylation. KaiA stimulates KaiC autophosphorylation, while KaiB sequesters KaiA, leading to KaiC autodephosphorylation. Phospho-Ser-431 KaiC accumulation triggers binding of KaiB to form the KaiB(6):KaiC(6) complex, leading to changes in output regulators CikA and SasA. KaiB switches to a thioredoxin-like fold (KaiB(fs)) when bound to KaiC. KaiB(6):KaiC(6) formation exposes a site for KaiA binding that sequesters KaiA from KaiC, making the KaiC(6):KaiB(6):KaiA(12) complex that results in KaiC autodephosphorylation. A metamorphic protein which reversibly switches between an inactive tetrameric fold and a rare, thioredoxin-like monomeric fold (KaiB(fs)). KaiB(fs) binds phospho-KaiC, KaiA and CikA. KaiA and CikA compete for binding to KaiB(fs), and KaiB(fs) and SasA compete for binding to KaiC, thus the clock oscillator and output signal pathway are tightly coupled. This chain is Circadian clock oscillator protein KaiB, found in Nostoc punctiforme (strain ATCC 29133 / PCC 73102).